The primary structure comprises 165 residues: Phosphopantetheine adenylyltransferase (165 aa).

Ser9 contributes to the substrate binding site. Residues 9–10 and His17 contribute to the ATP site; that span reads SF. Residues Lys41, Ile75, and Arg89 each contribute to the substrate site. ATP-binding positions include 90-92, Glu100, and 125-131; these read GVR and YLFVRSD.

Belongs to the bacterial CoaD family. As to quaternary structure, homohexamer. The cofactor is Mg(2+).

The protein resides in the cytoplasm. It catalyses the reaction (R)-4'-phosphopantetheine + ATP + H(+) = 3'-dephospho-CoA + diphosphate. It functions in the pathway cofactor biosynthesis; coenzyme A biosynthesis; CoA from (R)-pantothenate: step 4/5. Its function is as follows. Reversibly transfers an adenylyl group from ATP to 4'-phosphopantetheine, yielding dephospho-CoA (dPCoA) and pyrophosphate. This chain is Phosphopantetheine adenylyltransferase, found in Borrelia turicatae (strain 91E135).